The following is a 186-amino-acid chain: MDTLCLSHHFLIAMPDMEDSLFARAVVYMCDHGEQGAMGVIINHGADLTLDSLLGQIGLDGCRPDQVGLPVFVGGPVQSDRGFVLHEPIGNWQSSLTVTDNVALTTSRDVLAAVSHHEGPERLIVTLGYAGWEPGQLEHELAQNAWLTVPADMRIVFDLPVADRYDAAIRLLGIEPSALFGSAGHA.

Belongs to the UPF0301 (AlgH) family.

This chain is UPF0301 protein LHK_02881, found in Laribacter hongkongensis (strain HLHK9).